A 121-amino-acid polypeptide reads, in one-letter code: NAD(P)H-quinone oxidoreductase subunit M (121 aa).

It belongs to the complex I NdhM subunit family. NDH-1 can be composed of about 15 different subunits; different subcomplexes with different compositions have been identified which probably have different functions.

It localises to the cellular thylakoid membrane. The enzyme catalyses a plastoquinone + NADH + (n+1) H(+)(in) = a plastoquinol + NAD(+) + n H(+)(out). It catalyses the reaction a plastoquinone + NADPH + (n+1) H(+)(in) = a plastoquinol + NADP(+) + n H(+)(out). NDH-1 shuttles electrons from an unknown electron donor, via FMN and iron-sulfur (Fe-S) centers, to quinones in the respiratory and/or the photosynthetic chain. The immediate electron acceptor for the enzyme in this species is believed to be plastoquinone. Couples the redox reaction to proton translocation, and thus conserves the redox energy in a proton gradient. Cyanobacterial NDH-1 also plays a role in inorganic carbon-concentration. This is NAD(P)H-quinone oxidoreductase subunit M from Synechococcus sp. (strain JA-3-3Ab) (Cyanobacteria bacterium Yellowstone A-Prime).